The chain runs to 91 residues: Small ribosomal subunit protein uS19 (91 aa).

This sequence belongs to the universal ribosomal protein uS19 family.

Functionally, protein S19 forms a complex with S13 that binds strongly to the 16S ribosomal RNA. The protein is Small ribosomal subunit protein uS19 of Exiguobacterium sp. (strain ATCC BAA-1283 / AT1b).